Here is a 280-residue protein sequence, read N- to C-terminus: RNA polymerase II holoenzyme cyclin-like subunit (280 aa).

Residues 23-150 (ERRKGLEDIF…LIEELGTYLV (128 aa)) form the Cyclin N-terminal domain.

The protein belongs to the cyclin family. Cyclin C subfamily. As to quaternary structure, component of the SRB8-11 complex, a regulatory module of the Mediator complex.

It localises to the nucleus. In terms of biological role, component of the SRB8-11 complex. The SRB8-11 complex is a regulatory module of the Mediator complex which is itself involved in regulation of basal and activated RNA polymerase II-dependent transcription. The SRB8-11 complex may be involved in the transcriptional repression of a subset of genes regulated by Mediator. It may inhibit the association of the Mediator complex with RNA polymerase II to form the holoenzyme complex. The SRB8-11 complex phosphorylates the C-terminal domain (CTD) of the largest subunit of RNA polymerase II. This is RNA polymerase II holoenzyme cyclin-like subunit (SSN8) from Yarrowia lipolytica (strain CLIB 122 / E 150) (Yeast).